The primary structure comprises 775 residues: MAADSEPESEVGCPLTPLPPVSIAIRFTYVLQDWQQYFWPQQPPDIDALVGGEVGGLEFGKLPFGACEDPISELHLATTWPHLTEGIIVDNDVYSDLDPVQAPHWSVRVRKADNPQCLLGDFVTEFLKICRRKESTDEILGRSTFEEEGRVADITHALSKLTEPAPVPIHKLSVSNMVHTAKKKIRKHRGEESPLNNDVLNTILLFLFPDAASEKPLDGTTSVDNSNPAAEAGDYTLYNQFKSAPSDSLTYKLALCLCMINFYHGGLKGVAHLWQEFVLEMRFRWENNFLIPGLASGPPDLRCCLLHQKLQMLNCCIERKKARDEGKKTSPSDSMTKAYPADAGKAGGQLGLDHLRDTEKEKGEAGKSWDSWSDSEEEFFECLSDAEDLRGNGQESTKKGGPKDMAPLKPEGRLHQHGKLTLLRNGEPLYIPVTQEPAPMTEDLLEEQSEVLAKLGTSAEGAHLRARMQSACLLSDMESFKAANPGCCLEDFVRWYSPRDYIEEEVTDEKGNVVLKGELSARMKIPSNMWVEAWETAKPVPARRQRRLFDDTREAEKVLHYLAMQKPADLARHLLPCVIHAAVLKVKEEESLENIPSVKKIIKQIIAHSSKVLRFPSPEDKKLEEIILQITTVEAIIARARSLKAKFGTEKCEHEEEKEDLERFVSCLLEQPEVAVTGAGRGHAGRIIHKLFVNAQRAAAVALPEEELKRSGCPEERRQTLVSDFPPPAGRELILRATVPRPAPYSKALPQRMYSVLTKEDFRLAGAFSSDTSFF.

Residues S173, S330, S373, S375, and S384 each carry the phosphoserine modification. The interval D324–G351 is disordered. Residues A386–L414 form a disordered region. S458 carries the post-translational modification Phosphoserine.

Belongs to the Rab3-GAP catalytic subunit family. In terms of assembly, the Rab3 GTPase-activating complex is a heterodimer composed of Rab3gap1 and Rab3gap2. The Rab3 GTPase-activating complex interacts with DMXL2. Interacts with LMAN1.

It is found in the cytoplasm. It localises to the endoplasmic reticulum. The protein localises to the golgi apparatus. Its subcellular location is the cis-Golgi network. Its function is as follows. Catalytic subunit of the Rab3 GTPase-activating (Rab3GAP) complex composed of RAB3GAP1 and RAB3GAP2, which has GTPase-activating protein (GAP) activity towards various Rab3 subfamily members (RAB3A, RAB3B, RAB3C and RAB3D), RAB5A and RAB43, and guanine nucleotide exchange factor (GEF) activity towards RAB18. As part of the Rab3GAP complex, acts as a GAP for Rab3 proteins by converting active RAB3-GTP to the inactive form RAB3-GDP. Rab3 proteins are involved in regulated exocytosis of neurotransmitters and hormones. The Rab3GAP complex, acts as a GEF for RAB18 by promoting the conversion of inactive RAB18-GDP to the active form RAB18-GTP. Recruits and stabilizes RAB18 at the cis-Golgi membrane where RAB18 is most likely activated. Also involved in RAB18 recruitment at the endoplasmic reticulum (ER) membrane where it maintains proper ER structure. Required for normal eye and brain development. May participate in neurodevelopmental processes such as proliferation, migration and differentiation before synapse formation, and non-synaptic vesicular release of neurotransmitters. This is Rab3 GTPase-activating protein catalytic subunit from Rattus norvegicus (Rat).